A 215-amino-acid chain; its full sequence is Probable serine/threonine-protein kinase 2 (215 aa).

The Protein kinase domain occupies 1 to 205 (MKPEQLVYLN…WLLKEMEQLL (205 aa)).

It belongs to the protein kinase superfamily. Ser/Thr protein kinase family. Interacts with the kinase domain of host EIF2AK2.

It localises to the host cytoplasm. The catalysed reaction is L-seryl-[protein] + ATP = O-phospho-L-seryl-[protein] + ADP + H(+). The enzyme catalyses L-threonyl-[protein] + ATP = O-phospho-L-threonyl-[protein] + ADP + H(+). Its function is as follows. Plays a role in the inhibition of host eIF2alpha/EIF2S1 phosphorylation, thereby increasing viral fitness. In the insect host, targets the endogenous insect heme-regulated inhibitor (HRI)-like eIF2alpha kinase. This Autographa californica nuclear polyhedrosis virus (AcMNPV) protein is Probable serine/threonine-protein kinase 2 (PK2).